The following is a 486-amino-acid chain: Malonate-semialdehyde dehydrogenase (486 aa).

5 residues coordinate NAD(+): phenylalanine 154, lysine 178, glutamate 181, arginine 182, and serine 231. Cysteine 286 (nucleophile) is an active-site residue. Glutamate 386 is a binding site for NAD(+).

Belongs to the aldehyde dehydrogenase family. IolA subfamily. As to quaternary structure, homotetramer.

It carries out the reaction 3-oxopropanoate + NAD(+) + CoA + H2O = hydrogencarbonate + acetyl-CoA + NADH + H(+). The enzyme catalyses 2-methyl-3-oxopropanoate + NAD(+) + CoA + H2O = propanoyl-CoA + hydrogencarbonate + NADH + H(+). It functions in the pathway polyol metabolism; myo-inositol degradation into acetyl-CoA; acetyl-CoA from myo-inositol: step 7/7. Functionally, catalyzes the oxidation of malonate semialdehyde (MSA) and methylmalonate semialdehyde (MMSA) into acetyl-CoA and propanoyl-CoA, respectively. Is involved in a myo-inositol catabolic pathway. Bicarbonate, and not CO2, is the end-product of the enzymatic reaction. The sequence is that of Malonate-semialdehyde dehydrogenase from Bacillus pumilus (strain SAFR-032).